The chain runs to 242 residues: DNA repair protein RecO (242 aa).

This sequence belongs to the RecO family. In terms of assembly, monomer.

Functionally, involved in DNA repair and RecF pathway recombination. This chain is DNA repair protein RecO, found in Salmonella agona (strain SL483).